The chain runs to 379 residues: Pectin lyase A (379 aa).

The N-terminal stretch at 1-20 (MKTTFLVSLATAALSSTAAA) is a signal peptide. 2 disulfide bridges follow: cysteine 83/cysteine 102 and cysteine 92/cysteine 226. Arginine 256 is a catalytic residue. Cysteine 323 and cysteine 331 are disulfide-bonded.

Belongs to the polysaccharide lyase 1 family.

The protein resides in the secreted. The catalysed reaction is Eliminative cleavage of (1-&gt;4)-alpha-D-galacturonan methyl ester to give oligosaccharides with 4-deoxy-6-O-methyl-alpha-D-galact-4-enuronosyl groups at their non-reducing ends.. Its function is as follows. Pectinolytic enzymes consist of four classes of enzymes: pectin lyase, polygalacturonase, pectin methylesterase and rhamnogalacturonase. Among pectinolytic enzymes, pectin lyase is the most important in depolymerization of pectin, since it cleaves internal glycosidic bonds of highly methylated pectins. The protein is Pectin lyase A (pelA) of Emericella nidulans (strain FGSC A4 / ATCC 38163 / CBS 112.46 / NRRL 194 / M139) (Aspergillus nidulans).